A 556-amino-acid chain; its full sequence is Formate--tetrahydrofolate ligase (556 aa).

65–72 is an ATP binding site; the sequence is TPAGEGKT.

The protein belongs to the formate--tetrahydrofolate ligase family.

The catalysed reaction is (6S)-5,6,7,8-tetrahydrofolate + formate + ATP = (6R)-10-formyltetrahydrofolate + ADP + phosphate. Its pathway is one-carbon metabolism; tetrahydrofolate interconversion. In Agathobacter rectalis (strain ATCC 33656 / DSM 3377 / JCM 17463 / KCTC 5835 / VPI 0990) (Eubacterium rectale), this protein is Formate--tetrahydrofolate ligase.